Reading from the N-terminus, the 866-residue chain is Probable beta-glucosidase F (866 aa).

Residues Met-1 to Ser-20 form the signal peptide. 3 N-linked (GlcNAc...) asparagine glycosylation sites follow: Asn-65, Asn-73, and Asn-257. Asp-285 is an active-site residue. N-linked (GlcNAc...) asparagine glycans are attached at residues Asn-328, Asn-360, Asn-395, Asn-421, Asn-474, Asn-659, Asn-664, and Asn-724. The interval Ser-725–Ala-748 is disordered.

Belongs to the glycosyl hydrolase 3 family.

It is found in the secreted. The enzyme catalyses Hydrolysis of terminal, non-reducing beta-D-glucosyl residues with release of beta-D-glucose.. Its pathway is glycan metabolism; cellulose degradation. Functionally, beta-glucosidases are one of a number of cellulolytic enzymes involved in the degradation of cellulosic biomass. Catalyzes the last step releasing glucose from the inhibitory cellobiose. This Aspergillus flavus (strain ATCC 200026 / FGSC A1120 / IAM 13836 / NRRL 3357 / JCM 12722 / SRRC 167) protein is Probable beta-glucosidase F (bglF).